A 94-amino-acid polypeptide reads, in one-letter code: Integration host factor subunit beta (94 aa).

It belongs to the bacterial histone-like protein family. In terms of assembly, heterodimer of an alpha and a beta chain.

Its function is as follows. This protein is one of the two subunits of integration host factor, a specific DNA-binding protein that functions in genetic recombination as well as in transcriptional and translational control. This chain is Integration host factor subunit beta, found in Citrobacter koseri (strain ATCC BAA-895 / CDC 4225-83 / SGSC4696).